A 184-amino-acid chain; its full sequence is Protein GrpE (184 aa).

The tract at residues 1-26 (MTAPQEPVDSTPESGENAATPGLEDD) is disordered.

It belongs to the GrpE family. Homodimer.

It is found in the cytoplasm. In terms of biological role, participates actively in the response to hyperosmotic and heat shock by preventing the aggregation of stress-denatured proteins, in association with DnaK and GrpE. It is the nucleotide exchange factor for DnaK and may function as a thermosensor. Unfolded proteins bind initially to DnaJ; upon interaction with the DnaJ-bound protein, DnaK hydrolyzes its bound ATP, resulting in the formation of a stable complex. GrpE releases ADP from DnaK; ATP binding to DnaK triggers the release of the substrate protein, thus completing the reaction cycle. Several rounds of ATP-dependent interactions between DnaJ, DnaK and GrpE are required for fully efficient folding. This is Protein GrpE from Bordetella bronchiseptica (strain ATCC BAA-588 / NCTC 13252 / RB50) (Alcaligenes bronchisepticus).